Consider the following 258-residue polypeptide: Probable parvulin-type peptidyl-prolyl cis-trans isomerase (258 aa).

The N-terminal stretch at 1-19 (MKRIAMLAAACVIAVPAFA) is a signal peptide. The PpiC domain occupies 127 to 219 (KMEYKVRHIL…FGWHVIQVDD (93 aa)). Basic and acidic residues predominate over residues 158-175 (DDLAKKNSKDPGSAERGG). Positions 158 to 178 (DDLAKKNSKDPGSAERGGDLG) are disordered.

It belongs to the PpiC/parvulin rotamase family.

It catalyses the reaction [protein]-peptidylproline (omega=180) = [protein]-peptidylproline (omega=0). In Bordetella bronchiseptica (strain ATCC BAA-588 / NCTC 13252 / RB50) (Alcaligenes bronchisepticus), this protein is Probable parvulin-type peptidyl-prolyl cis-trans isomerase.